A 731-amino-acid chain; its full sequence is Bifunctional trehalose-6-phosphate synthase/phosphatase (731 aa).

The segment at 1–464 (MRLIVVSNRL…WGTDFIYSLI (464 aa)) is alpha,alpha-trehalose-phosphate synthase. Arg9 is a binding site for D-glucose 6-phosphate. 25–26 (GG) lines the UDP-alpha-D-glucose pocket. Tyr89 and Asp143 together coordinate D-glucose 6-phosphate. Residues Arg276 and Lys281 each coordinate UDP-alpha-D-glucose. Arg314 serves as a coordination point for D-glucose 6-phosphate. UDP-alpha-D-glucose is bound at residue 379–383 (LVAKE). Residues 465–731 (SAKSAREEVE…RSLLEQLRPP (267 aa)) form a trehalose-6-phosphate phosphatase region. Residue Asp503 is the Nucleophile of the active site. The Mg(2+) site is built by Asp503, Asp505, and Asp684. Alpha,alpha-trehalose 6-phosphate is bound at residue 503-505 (DYD).

It in the N-terminal section; belongs to the glycosyltransferase 20 family. In the C-terminal section; belongs to the trehalose phosphatase family. As to quaternary structure, may interact with the putative glycosyltransferase (GT) TTX_1305. TTX_1305 is required for the trehalose-6-phosphate synthase activity of tpsp. Mg(2+) is required as a cofactor.

The catalysed reaction is D-glucose 6-phosphate + UDP-alpha-D-glucose = alpha,alpha-trehalose 6-phosphate + UDP + H(+). The enzyme catalyses alpha,alpha-trehalose 6-phosphate + H2O = alpha,alpha-trehalose + phosphate. The protein operates within glycan biosynthesis; trehalose biosynthesis. In terms of biological role, bifunctional enzyme which catalyzes the transfer of glucose from UDP-alpha-D-glucose to glucose-6-phosphate to form trehalose-6-phosphate (Tre6P) and removes the phosphate from Tre6P to produce free trehalose. This is Bifunctional trehalose-6-phosphate synthase/phosphatase from Thermoproteus tenax (strain ATCC 35583 / DSM 2078 / JCM 9277 / NBRC 100435 / Kra 1).